Reading from the N-terminus, the 184-residue chain is ATP synthase subunit b, chloroplastic (184 aa).

The helical transmembrane segment at 26–48 (ILATNLINLSVVLGVLIFFGKGV) threads the bilayer.

This sequence belongs to the ATPase B chain family. In terms of assembly, F-type ATPases have 2 components, F(1) - the catalytic core - and F(0) - the membrane proton channel. F(1) has five subunits: alpha(3), beta(3), gamma(1), delta(1), epsilon(1). F(0) has four main subunits: a(1), b(1), b'(1) and c(10-14). The alpha and beta chains form an alternating ring which encloses part of the gamma chain. F(1) is attached to F(0) by a central stalk formed by the gamma and epsilon chains, while a peripheral stalk is formed by the delta, b and b' chains.

The protein localises to the plastid. It is found in the chloroplast thylakoid membrane. In terms of biological role, f(1)F(0) ATP synthase produces ATP from ADP in the presence of a proton or sodium gradient. F-type ATPases consist of two structural domains, F(1) containing the extramembraneous catalytic core and F(0) containing the membrane proton channel, linked together by a central stalk and a peripheral stalk. During catalysis, ATP synthesis in the catalytic domain of F(1) is coupled via a rotary mechanism of the central stalk subunits to proton translocation. Functionally, component of the F(0) channel, it forms part of the peripheral stalk, linking F(1) to F(0). In Acorus calamus (Sweet flag), this protein is ATP synthase subunit b, chloroplastic.